The following is a 193-amino-acid chain: Guanylate kinase (193 aa).

The Guanylate kinase-like domain occupies 8-188 (GRLVVLVGPS…ACEQLVSLFV (181 aa)). 15–22 (GPSAVGKS) serves as a coordination point for ATP.

This sequence belongs to the guanylate kinase family.

The protein resides in the cytoplasm. The enzyme catalyses GMP + ATP = GDP + ADP. In terms of biological role, essential for recycling GMP and indirectly, cGMP. In Nocardia farcinica (strain IFM 10152), this protein is Guanylate kinase.